The primary structure comprises 93 residues: Beta-defensin 128 (93 aa).

An N-terminal signal peptide occupies residues 1 to 18 (MKLFLVLIILLFEVLTDG). 3 cysteine pairs are disulfide-bonded: Cys24/Cys52, Cys32/Cys46, and Cys36/Cys53.

This sequence belongs to the beta-defensin family.

The protein localises to the secreted. In terms of biological role, has antibacterial activity. In Pongo pygmaeus (Bornean orangutan), this protein is Beta-defensin 128 (DEFB128).